Here is a 388-residue protein sequence, read N- to C-terminus: tRNA (guanine-N(7)-)-methyltransferase (388 aa).

Glu-129, Glu-154, and Asp-181 together coordinate S-adenosyl-L-methionine. Lys-207 and Asp-237 together coordinate substrate.

Belongs to the class I-like SAM-binding methyltransferase superfamily. TrmB family.

It carries out the reaction guanosine(46) in tRNA + S-adenosyl-L-methionine = N(7)-methylguanosine(46) in tRNA + S-adenosyl-L-homocysteine. It participates in tRNA modification; N(7)-methylguanine-tRNA biosynthesis. Its function is as follows. Catalyzes the formation of N(7)-methylguanine at position 46 (m7G46) in tRNA. In Wolinella succinogenes (strain ATCC 29543 / DSM 1740 / CCUG 13145 / JCM 31913 / LMG 7466 / NCTC 11488 / FDC 602W) (Vibrio succinogenes), this protein is tRNA (guanine-N(7)-)-methyltransferase.